The sequence spans 419 residues: L-rhamnose isomerase (419 aa).

Mn(2+) contacts are provided by His262, Asp294, and Asp296.

The protein belongs to the rhamnose isomerase family. In terms of assembly, homotetramer. It depends on Mn(2+) as a cofactor.

The protein resides in the cytoplasm. The catalysed reaction is L-rhamnopyranose = L-rhamnulose. It participates in carbohydrate degradation; L-rhamnose degradation; glycerone phosphate from L-rhamnose: step 1/3. Functionally, catalyzes the interconversion of L-rhamnose and L-rhamnulose. This Shigella flexneri protein is L-rhamnose isomerase.